Reading from the N-terminus, the 257-residue chain is Acetylglutamate kinase (257 aa).

Residues 43-44 (GG), Arg-65, and Asn-157 each bind substrate. ATP-binding positions include 180-185 (DVSGIL) and 208-210 (IIT).

It belongs to the acetylglutamate kinase family. ArgB subfamily. As to quaternary structure, homodimer.

The protein resides in the cytoplasm. It catalyses the reaction N-acetyl-L-glutamate + ATP = N-acetyl-L-glutamyl 5-phosphate + ADP. It functions in the pathway amino-acid biosynthesis; L-arginine biosynthesis; N(2)-acetyl-L-ornithine from L-glutamate: step 2/4. Functionally, catalyzes the ATP-dependent phosphorylation of N-acetyl-L-glutamate. The polypeptide is Acetylglutamate kinase (Salmonella paratyphi A (strain AKU_12601)).